The following is a 474-amino-acid chain: ATP synthase subunit beta (474 aa).

152–159 (GGAGVGKT) provides a ligand contact to ATP.

Belongs to the ATPase alpha/beta chains family. In terms of assembly, F-type ATPases have 2 components, CF(1) - the catalytic core - and CF(0) - the membrane proton channel. CF(1) has five subunits: alpha(3), beta(3), gamma(1), delta(1), epsilon(1). CF(0) has three main subunits: a(1), b(2) and c(9-12). The alpha and beta chains form an alternating ring which encloses part of the gamma chain. CF(1) is attached to CF(0) by a central stalk formed by the gamma and epsilon chains, while a peripheral stalk is formed by the delta and b chains.

Its subcellular location is the cell inner membrane. It catalyses the reaction ATP + H2O + 4 H(+)(in) = ADP + phosphate + 5 H(+)(out). Functionally, produces ATP from ADP in the presence of a proton gradient across the membrane. The catalytic sites are hosted primarily by the beta subunits. This chain is ATP synthase subunit beta, found in Paramagnetospirillum magneticum (strain ATCC 700264 / AMB-1) (Magnetospirillum magneticum).